We begin with the raw amino-acid sequence, 243 residues long: Complement C1q tumor necrosis factor-related protein 5 (243 aa).

The N-terminal stretch at 1 to 15 (MRPLLVLLLLGLAAG) is a signal peptide. Positions 15–125 (GSPPLDDNKI…PPPSDAPLPF (111 aa)) are disordered. The region spanning 30 to 95 (GHPGLPGTPG…AGPAGPTGPA (66 aa)) is the Collagen-like domain. Over residues 83-96 (RGEAGPAGPTGPAG) the composition is skewed to low complexity. Residues 99-238 (SVPPRSAFSA…GFLVYSDWHS (140 aa)) form the C1q domain.

May interact with ERFE. Homotrimer (via collagen-like domain). May form higher order oligomers by supercoiling of the trimers.

It is found in the secreted. The sequence is that of Complement C1q tumor necrosis factor-related protein 5 (C1QTNF5) from Homo sapiens (Human).